A 265-amino-acid polypeptide reads, in one-letter code: Polyphosphate glucokinase (265 aa).

Residues 1 to 18 (MTSTGPETSETPGATTQR) are compositionally biased toward polar residues. The interval 1–22 (MTSTGPETSETPGATTQRHGFG) is disordered. 24-29 (DVGGSG) lines the ATP pocket.

Belongs to the ROK (NagC/XylR) family. In terms of assembly, homodimer.

The enzyme catalyses [phosphate](n) + D-glucose = [phosphate](n-1) + D-glucose 6-phosphate + H(+). The catalysed reaction is D-glucose + ATP = D-glucose 6-phosphate + ADP + H(+). Catalyzes the phosphorylation of glucose using polyphosphate or ATP as the phosphoryl donor. Polyphosphate, rather than ATP, seems to be the major phosphate donor for the enzyme in M.tuberculosis. GTP, UTP and CTP can replace ATP as phosphoryl donor. In Mycobacterium tuberculosis (strain ATCC 25177 / H37Ra), this protein is Polyphosphate glucokinase (ppgK).